The chain runs to 840 residues: Kinesin-like protein KIN-14J (840 aa).

A disordered region spans residues 1-74 (MEADPAPSST…KGEEPVVSAE (74 aa)). A Kinesin motor domain is found at 177–501 (NIRVFCRCRP…LNFASRVRAI (325 aa)). An ATP-binding site is contributed by 260–267 (GQTGTGKT). Residues 517–594 (KLKQMTEKIR…KKAARDTARS (78 aa)) adopt a coiled-coil conformation. The segment covering 581–593 (LANEKKAARDTAR) has biased composition (basic and acidic residues). Residues 581-617 (LANEKKAARDTARSTKPPLAPMRQRPPLGRIGNHIPP) are disordered.

It belongs to the TRAFAC class myosin-kinesin ATPase superfamily. Kinesin family. KIN-14 subfamily.

The polypeptide is Kinesin-like protein KIN-14J (Oryza sativa subsp. japonica (Rice)).